A 1310-amino-acid chain; its full sequence is Angiotensin-converting enzyme (1310 aa).

The signal sequence occupies residues 1 to 33 (MGAAPGRRGPRLLRPPPPLLLLLLLLRPPPAAL). The Extracellular portion of the chain corresponds to 34–1260 (TLDPGLLPGD…GMNLDAQQAR (1227 aa)). Peptidase M2 domains are found at residues 45–628 (AADE…LGWP) and 647–1226 (VTDE…LGWP). N-linked (GlcNAc...) asparagine glycosylation is found at asparagine 59, asparagine 79, and asparagine 151. The cysteines at positions 162 and 170 are disulfide-linked. A chloride-binding site is contributed by tyrosine 236. Residue asparagine 323 is glycosylated (N-linked (GlcNAc...) asparagine). Cysteine 364 and cysteine 382 are joined by a disulfide. Histidine 395 provides a ligand contact to Zn(2+). Glutamate 396 (proton acceptor 1) is an active-site residue. Zn(2+) is bound by residues histidine 399 and glutamate 422. Asparagine 449 and asparagine 513 each carry an N-linked (GlcNAc...) asparagine glycan. Histidine 524 (proton donor 1) is an active-site residue. Arginine 533 lines the chloride pocket. A disulfide bond links cysteine 549 and cysteine 561. 3 N-linked (GlcNAc...) asparagine glycosylation sites follow: asparagine 681, asparagine 699, and asparagine 718. Cysteines 761 and 767 form a disulfide. The chloride site is built by arginine 795 and tyrosine 833. An N-linked (GlcNAc...) asparagine glycan is attached at asparagine 946. Cysteine 961 and cysteine 979 are joined by a disulfide. A Zn(2+)-binding site is contributed by histidine 992. Glutamate 993 (proton acceptor 2) is an active-site residue. Residues histidine 996 and glutamate 1020 each coordinate Zn(2+). Residues tryptophan 1094 and arginine 1098 each coordinate chloride. Catalysis depends on histidine 1122, which acts as the Proton donor 2. Arginine 1131 is a chloride binding site. Residues cysteine 1147 and cysteine 1159 are joined by a disulfide bond. Asparagine 1195 is a glycosylation site (N-linked (GlcNAc...) asparagine). Residues 1219–1260 (HGEKLGWPQYTWTPNSARSEGSLPDSGRVNFLGMNLDAQQAR) are juxtamembrane stalk. A helical membrane pass occupies residues 1261–1281 (VGQWVLLFLGVALLLASLGLT). Residues 1282–1310 (QRLFSIRYQSLRQPHHGPQFGSEVELRHS) lie on the Cytoplasmic side of the membrane. Serine 1303 carries the phosphoserine modification.

It belongs to the peptidase M2 family. As to quaternary structure, monomer and homodimer; homodimerizes following binding to an inhibitor. Interacts with calmodulin (CALM1, CALM2 or CALM3); interaction takes place in the cytoplasmic region and regulates phosphorylation and proteolytic cleavage. The cofactor is Zn(2+). It depends on chloride as a cofactor. Post-translationally, N-glycosylated. Phosphorylated by CK2 on Ser-1303; which allows membrane retention. Phosphorylated on tyrosine residues on its extracellular part, promoting cleavage by secretase enzymes and formation of the soluble form (Angiotensin-converting enzyme, soluble form). In terms of processing, produced following proteolytic cleavage by secretase enzymes that cleave the transmembrane form in the juxtamembrane stalk region upstream of the transmembrane region. Cleavage can take place at different sites of the juxtamembrane stalk region. As to expression, testis-specific isoform is expressed in spermatocytes, adult testis.

The protein resides in the cell membrane. It is found in the cytoplasm. The protein localises to the secreted. It carries out the reaction Release of a C-terminal dipeptide, oligopeptide-|-Xaa-Yaa, when Xaa is not Pro, and Yaa is neither Asp nor Glu. Thus, conversion of angiotensin I to angiotensin II, with increase in vasoconstrictor activity, but no action on angiotensin II.. It catalyses the reaction angiotensin I + H2O = L-histidyl-L-leucine + angiotensin II. The enzyme catalyses bradykinin + H2O = L-Phe-L-Arg + bradykinin(1-7). The catalysed reaction is substance P + H2O = substance P(1-9) + L-Leu-L-Met-NH2. It carries out the reaction substance P + H2O = substance P(1-8) + Gly-L-Leu-L-Met-NH2. It catalyses the reaction substance P + H2O = L-Phe-L-Phe-Gly-L-Leu-L-Met-NH2 + substance P(1-6). The enzyme catalyses neurotensin + H2O = neurotensin(1-11) + L-isoleucyl-L-leucine. The catalysed reaction is goralatide + H2O = N-acetyl-L-seryl-L-aspartate + L-lysyl-L-proline. It carries out the reaction Met-enkephalin + H2O = L-phenylalanyl-L-methionine + L-tyrosylglycylglycine. It catalyses the reaction Leu-enkephalin + H2O = L-tyrosylglycylglycine + L-phenylalanyl-L-leucine. The enzyme catalyses Met-enkephalin-Arg-Phe + H2O = L-arginyl-L-phenylalanine + Met-enkephalin. Its activity is regulated as follows. The dipeptidyl carboxypeptidase activity is strongly activated by chloride. Specifically inhibited by lisinopril. Inhibited by mixanpril, an orally-active drug used for the treatment of hypertension. With respect to regulation, strongly inhibited by lisinopril and captopril. Dipeptidyl carboxypeptidase that removes dipeptides from the C-terminus of a variety of circulating hormones, such as angiotensin I, bradykinin or enkephalins, thereby playing a key role in the regulation of blood pressure, electrolyte homeostasis or synaptic plasticity. Composed of two similar catalytic domains, each possessing a functional active site, with different selectivity for substrates. Plays a major role in the angiotensin-renin system that regulates blood pressure and sodium retention by the kidney by converting angiotensin I to angiotensin II, resulting in an increase of the vasoconstrictor activity of angiotensin. Also able to inactivate bradykinin, a potent vasodilator, and therefore enhance the blood pressure response. Acts as a regulator of synaptic transmission by mediating cleavage of neuropeptide hormones, such as substance P, neurotensin or enkephalins. Catalyzes degradation of different enkephalin neuropeptides (Met-enkephalin, Leu-enkephalin, Met-enkephalin-Arg-Phe and possibly Met-enkephalin-Arg-Gly-Leu). Acts as a regulator of synaptic plasticity in the nucleus accumbens of the brain by mediating cleavage of Met-enkephalin-Arg-Phe, a strong ligand of Mu-type opioid receptor OPRM1, into Met-enkephalin. Met-enkephalin-Arg-Phe cleavage by ACE decreases activation of OPRM1, leading to long-term synaptic potentiation of glutamate release. Also acts as a regulator of hematopoietic stem cell differentiation by mediating degradation of hemoregulatory peptide N-acetyl-SDKP (AcSDKP). Acts as a regulator of cannabinoid signaling pathway by mediating degradation of hemopressin, an antagonist peptide of the cannabinoid receptor CNR1. Involved in amyloid-beta metabolism by catalyzing degradation of Amyloid-beta protein 40 and Amyloid-beta protein 42 peptides, thereby preventing plaque formation. Catalyzes cleavage of cholecystokinin (maturation of Cholecystokinin-8 and Cholecystokinin-5) and Gonadoliberin-1 (both maturation and degradation) hormones. Degradation of hemoregulatory peptide N-acetyl-SDKP (AcSDKP) and amyloid-beta proteins is mediated by the N-terminal catalytic domain, while angiotensin I and cholecystokinin cleavage is mediated by the C-terminal catalytic region. In terms of biological role, soluble form that is released in blood plasma and other body fluids following proteolytic cleavage in the juxtamembrane stalk region. Its function is as follows. Isoform produced by alternative promoter usage that is specifically expressed in spermatocytes and adult testis, and which is required for male fertility. In contrast to somatic isoforms, only contains one catalytic domain. Acts as a dipeptidyl carboxypeptidase that removes dipeptides from the C-terminus of substrates. The identity of substrates that are needed for male fertility is unknown. May also have a glycosidase activity which releases GPI-anchored proteins from the membrane by cleaving the mannose linkage in the GPI moiety. The GPIase activity was reported to be essential for the egg-binding ability of the sperm. This activity is however unclear and has been challenged by other groups, suggesting that it may be indirect. This is Angiotensin-converting enzyme from Oryctolagus cuniculus (Rabbit).